A 315-amino-acid polypeptide reads, in one-letter code: Ribosomal RNA small subunit methyltransferase H (315 aa).

Residues 34–36, aspartate 53, aspartate 100, and histidine 107 each bind S-adenosyl-L-methionine; that span reads GGH.

It belongs to the methyltransferase superfamily. RsmH family.

It is found in the cytoplasm. It catalyses the reaction cytidine(1402) in 16S rRNA + S-adenosyl-L-methionine = N(4)-methylcytidine(1402) in 16S rRNA + S-adenosyl-L-homocysteine + H(+). Its function is as follows. Specifically methylates the N4 position of cytidine in position 1402 (C1402) of 16S rRNA. The chain is Ribosomal RNA small subunit methyltransferase H from Treponema denticola (strain ATCC 35405 / DSM 14222 / CIP 103919 / JCM 8153 / KCTC 15104).